A 297-amino-acid chain; its full sequence is Glycerol-3-phosphate dehydrogenase [NAD(P)+] (297 aa).

The NADPH site is built by tryptophan 11, arginine 30, and lysine 79. 3 residues coordinate sn-glycerol 3-phosphate: lysine 79, glycine 107, and serine 109. Residue alanine 111 participates in NADPH binding. Sn-glycerol 3-phosphate contacts are provided by lysine 161, aspartate 214, serine 224, arginine 225, and asparagine 226. Residue lysine 161 is the Proton acceptor of the active site. Residue arginine 225 coordinates NADPH. Valine 249 and glutamate 251 together coordinate NADPH.

The protein belongs to the NAD-dependent glycerol-3-phosphate dehydrogenase family.

The protein resides in the cytoplasm. It catalyses the reaction sn-glycerol 3-phosphate + NAD(+) = dihydroxyacetone phosphate + NADH + H(+). The enzyme catalyses sn-glycerol 3-phosphate + NADP(+) = dihydroxyacetone phosphate + NADPH + H(+). The protein operates within membrane lipid metabolism; glycerophospholipid metabolism. Functionally, catalyzes the reduction of the glycolytic intermediate dihydroxyacetone phosphate (DHAP) to sn-glycerol 3-phosphate (G3P), the key precursor for phospholipid synthesis. The chain is Glycerol-3-phosphate dehydrogenase [NAD(P)+] from Wolinella succinogenes (strain ATCC 29543 / DSM 1740 / CCUG 13145 / JCM 31913 / LMG 7466 / NCTC 11488 / FDC 602W) (Vibrio succinogenes).